Reading from the N-terminus, the 214-residue chain is MVFSTTAALSLLLALSSMQLSEVSEACTCMPNHPQEAFCNSDIVIRAKVVGKKLLKDGPFGTMRYTIKQMKMYRGFSKMQQVQYIYTEAAESLCGVRLQVNKFQYLITGRVFDGEVYTGVCNFIVPWDRLTLSQRKGLNHRYQYGCNCKIKPCYYLPCFVTAKNECFWTDMLSDQGYMGHQAKHYVCIRQKEGYCSWYRGAAPPDKTRINATDP.

The N-terminal stretch at 1-26 is a signal peptide; sequence MVFSTTAALSLLLALSSMQLSEVSEA. A Zn(2+)-binding site is contributed by cysteine 27. Involved in metalloproteinase-binding regions lie at residues 27–30 and 91–92; these read CTCM and ES. Cystine bridges form between cysteine 27–cysteine 94, cysteine 29–cysteine 121, cysteine 39–cysteine 146, cysteine 148–cysteine 195, cysteine 153–cysteine 158, and cysteine 166–cysteine 187. Positions 27-146 constitute an NTR domain; sequence CTCMPNHPQE…GLNHRYQYGC (120 aa). A glycan (N-linked (GlcNAc...) asparagine) is linked at asparagine 210.

The protein belongs to the protease inhibitor I35 (TIMP) family. In terms of tissue distribution, expressed abundantly in brain and cartilage.

It localises to the secreted. The protein resides in the extracellular space. Its subcellular location is the extracellular matrix. Functionally, complexes with metalloproteinases (such as collagenases) and irreversibly inactivates them by binding to their catalytic zinc cofactor. May form part of a tissue-specific acute response to remodeling stimuli. The chain is Metalloproteinase inhibitor 3 (TIMP3) from Scyliorhinus torazame (Cloudy catshark).